The chain runs to 492 residues: Trehalose-phosphatase (492 aa).

The disordered stretch occupies residues 1–55 (MTETVTDQGKQRSSKLQKNEAAKDEQVEGKGKETLESGTDKSAEQNSSLLVGQPD). Basic and acidic residues predominate over residues 17–43 (QKNEAAKDEQVEGKGKETLESGTDKSA). Mg(2+)-binding residues include aspartate 213 and aspartate 215. Aspartate 215 serves as the catalytic Proton donor/acceptor. 332-334 (QRK) contacts substrate. Aspartate 424 is a binding site for Mg(2+).

The protein belongs to the gob-1 trehalose phosphatase family. The cofactor is Mg(2+).

It carries out the reaction alpha,alpha-trehalose 6-phosphate + H2O = alpha,alpha-trehalose + phosphate. Inhibited by trehalose 6-sulfate. In terms of biological role, catalyzes the hydrolysis of trehalose 6-phosphate to trehalose and phosphate; prevents the accumulation of toxic levels of trehalose 6-phosphate. The sequence is that of Trehalose-phosphatase from Brugia malayi (Filarial nematode worm).